Here is a 311-residue protein sequence, read N- to C-terminus: MKETLSGVVTRVTGASYIVETGDGLKVRCRTVPGTVSENEGSNLVAVGDRVEFRPKASETDMAEGVITRVEERRTALVRRREVRRNRSKEKEQVIVANIDQLVLITSFDDPPFNSRLVDRYLVFAESEKLPLLIVVNKIDLDEEGMVEEDLEVYRQLDCNICLVSAEDGRGIEELRELLRDRVSAFSGHSGVGKSTLINLLVGCEELRTAETSGKTGKGVHTTTSSAMFQLPGGGYVIDTPGIREFNLAGITRENLRFYYTEFLRYMPECTFSSCSHTVEPGCAVIAAVESGSIARERYESYLALLDSLAE.

In terms of domain architecture, CP-type G spans 88–246 (SKEKEQVIVA…VIDTPGIREF (159 aa)). GTP contacts are provided by residues 137–140 (NKID) and 188–196 (GHSGVGKST). The Zn(2+) site is built by C270, C275, H277, and C283.

The protein belongs to the TRAFAC class YlqF/YawG GTPase family. RsgA subfamily. As to quaternary structure, monomer. Associates with 30S ribosomal subunit, binds 16S rRNA. Zn(2+) is required as a cofactor.

It localises to the cytoplasm. Its function is as follows. One of several proteins that assist in the late maturation steps of the functional core of the 30S ribosomal subunit. Helps release RbfA from mature subunits. May play a role in the assembly of ribosomal proteins into the subunit. Circularly permuted GTPase that catalyzes slow GTP hydrolysis, GTPase activity is stimulated by the 30S ribosomal subunit. The polypeptide is Small ribosomal subunit biogenesis GTPase RsgA (Chlorobaculum tepidum (strain ATCC 49652 / DSM 12025 / NBRC 103806 / TLS) (Chlorobium tepidum)).